A 346-amino-acid chain; its full sequence is Coproporphyrin III ferrochelatase (346 aa).

The Fe-coproporphyrin III site is built by serine 52 and tyrosine 121. Fe(2+) contacts are provided by histidine 181 and glutamate 264.

This sequence belongs to the ferrochelatase family.

It is found in the cytoplasm. It catalyses the reaction Fe-coproporphyrin III + 2 H(+) = coproporphyrin III + Fe(2+). It functions in the pathway porphyrin-containing compound metabolism; protoheme biosynthesis. Involved in coproporphyrin-dependent heme b biosynthesis. Catalyzes the insertion of ferrous iron into coproporphyrin III to form Fe-coproporphyrin III. This is Coproporphyrin III ferrochelatase from Mycobacterium sp. (strain KMS).